The following is a 1984-amino-acid chain: Sodium channel protein type 9 subunit alpha (1984 aa).

The Cytoplasmic segment spans residues 1-125 (MAMLPPPGPQ…RRISIKILVH (125 aa)). The span at 26–39 (RISEEKAKEHKDEK) shows a compositional bias: basic and acidic residues. The tract at residues 26-55 (RISEEKAKEHKDEKKDDEEEGPKPSSDLEA) is disordered. Residues 112–410 (FSPLRRISIK…VAMAYEEQNQ (299 aa)) form an I repeat. The chain crosses the membrane as a helical span at residues 126–145 (SLFSMLIMCTILTNCIFMTL). Over 146-150 (SNPPE) the chain is Extracellular. Residues 151–172 (WTKNVEYTFTGIYTFESLIKIL) traverse the membrane as a helical segment. The Cytoplasmic segment spans residues 173–185 (ARGFCVGEFTFLR). The helical transmembrane segment at 186 to 204 (DPWNWLDFVVIVFAYLTEF) threads the bilayer. The Extracellular portion of the chain corresponds to 205–210 (VNLGNV). Asn-209 carries an N-linked (GlcNAc...) asparagine glycan. The helical transmembrane segment at 211-227 (SALRTFRVLRALKTISV) threads the bilayer. Residues 228-241 (IPGLKTIVGALIQS) are Cytoplasmic-facing. The chain crosses the membrane as a helical span at residues 242-267 (VKKLSDVMILTVFCLSVFALIGLQLF). At 268–346 (MGNLKHKCFR…PDYGYTSFDT (79 aa)) the chain is on the extracellular side. Cys-275 and Cys-324 are oxidised to a cystine. Residue Asn-283 is glycosylated (N-linked (GlcNAc...) asparagine). An intramembrane region (pore-forming) is located at residues 347-363 (FSWAFLALFRLMTQDYW). Residues 364–376 (ENLYQQTLRAAGK) are Extracellular-facing. The chain crosses the membrane as a helical span at residues 377-402 (TYMIFFVVVIFLGSFYLINLILAVVA). Residues 403 to 744 (MAYEEQNQAN…LIYFIVMDPF (342 aa)) lie on the Cytoplasmic side of the membrane. Low complexity predominate over residues 461–471 (SSSETSRLSSK). Disordered regions lie at residues 461-542 (SSSE…RGSL) and 576-609 (IFGD…RSPP). Residues 474–486 (KERRNRRKKKKQK) are compositionally biased toward basic residues. Residues 489-509 (SGEEKGDDEKLSKSGSEESIR) show a composition bias toward basic and acidic residues. An II repeat occupies 725–988 (CSPYWIKFKK…EEDTDANNLQ (264 aa)). A helical transmembrane segment spans residues 745 to 761 (VDLAITICIVLNTLFMA). The Extracellular portion of the chain corresponds to 762 to 770 (MEHHPMTEE). Residues 771 to 795 (FKNVLAVGNLIFTGIFAAEMVLKLI) traverse the membrane as a helical segment. Residues 796-804 (AMDPYEYFQ) lie on the Cytoplasmic side of the membrane. A helical transmembrane segment spans residues 805 to 821 (VGWNIFDSLIVTLSLIE). Topologically, residues 822–830 (LFLADVEGL) are extracellular. The chain crosses the membrane as a helical span at residues 831 to 847 (SVLRSFRLLRVFKLAKS). Topologically, residues 848 to 864 (WPTLNMLIKIIGNSVGA) are cytoplasmic. A helical membrane pass occupies residues 865-887 (LGNLTLVLAIIVFIFAVVGMQLF). Topologically, residues 888-914 (GKSYKECVCKINVDCKLPRWHMNDFFH) are extracellular. Cys-896 and Cys-902 are disulfide-bonded. Residues 915–927 (SFLIVFRVLCGEW) constitute an intramembrane region (pore-forming). Over 928-939 (IETMWDCMEVAG) the chain is Extracellular. Cys-934 and Cys-943 form a disulfide bridge. The helical transmembrane segment at 940-966 (QTMCLIVYMMVMVIGNLVVLNLFLALL) threads the bilayer. Residues 967–1185 (LSSFSSDNLT…WWTIRKTCYR (219 aa)) are Cytoplasmic-facing. 2 disordered regions span residues 1015-1040 (KKPK…ISNR) and 1103-1145 (EELS…EPVN). The span at 1019–1035 (GSKDTKRTADPNNKKEN) shows a compositional bias: basic and acidic residues. Residues 1135 to 1145 (GEEEAEAEPVN) are compositionally biased toward acidic residues. An III repeat occupies 1178 to 1486 (TIRKTCYRIV…KKYYNAMKKL (309 aa)). A helical membrane pass occupies residues 1186-1210 (IVEHSWFESFIVLMILLSSGALAFE). The Extracellular segment spans residues 1211-1222 (DIYIEKKKTIKI). The helical transmembrane segment at 1223–1248 (ILEYADKIFTYIFILEMLLKWVAYGY) threads the bilayer. The Cytoplasmic segment spans residues 1249–1250 (KT). A helical transmembrane segment spans residues 1251 to 1276 (YFTNAWCWLDFLIVDVSLVTLVANTL). Residues 1277 to 1285 (GYSDLGPIK) are Extracellular-facing. A helical membrane pass occupies residues 1286–1302 (SLRTLRALRPLRALSRF). The Cytoplasmic portion of the chain corresponds to 1303 to 1315 (EGMRVVVNALIGA). A helical membrane pass occupies residues 1316–1340 (IPSIMNVLLVCLIFWLIFSIMGVNL). At 1341-1392 (FAGKFYECVNTTDGSRFPTSQVANRSECFALMNVSGNVRWKNLKVNFDNVGL) the chain is on the extracellular side. A disulfide bridge connects residues Cys-1348 and Cys-1368. N-linked (GlcNAc...) asparagine glycosylation is found at Asn-1350, Asn-1364, and Asn-1373. An intramembrane region (pore-forming) is located at residues 1393 to 1403 (GYLSLLQVATF). At 1404–1429 (KGWMDIMYAAVDSVNVNEQPKYEYSL) the chain is on the extracellular side. The helical transmembrane segment at 1430–1455 (YMYIYFVIFIIFGSFFTLNLFIGVII) threads the bilayer. Residues 1456 to 1512 (DNFNQQKKKLGGQDIFMTEEQKKYYNAMKKLGSKKPQKPIPRPGNKFQGCIFDLVTN) lie on the Cytoplasmic side of the membrane. Ser-1488 is subject to Phosphoserine; by PKC. The stretch at 1495 to 1793 (IPRPGNKFQG…WEKFDPDATQ (299 aa)) is one IV repeat. Residues 1513-1532 (QAFDITIMVLICLNMVTMMV) traverse the membrane as a helical segment. The Extracellular portion of the chain corresponds to 1533 to 1543 (EKEGQTEYMDY). Residues 1544–1565 (VLHWINMVFIILFTGECVLKLI) traverse the membrane as a helical segment. Over 1566 to 1574 (SLRHYYFTV) the chain is Cytoplasmic. Residues 1575-1596 (GWNIFDFVVVILSIVGMFLAEM) form a helical membrane-spanning segment. Over 1597-1605 (IEKYFVSPT) the chain is Extracellular. A helical membrane pass occupies residues 1606-1625 (LFRVIRLARIGRILRLIKGA). Topologically, residues 1626-1638 (KGIRTLLFALMMS) are cytoplasmic. Residues 1639–1661 (LPALFNIGLLLFLVMFIYAIFGM) traverse the membrane as a helical segment. At 1662 to 1684 (SNFAYVKKEAGINDMFNFETFGN) the chain is on the extracellular side. An intramembrane region (pore-forming) is located at residues 1685–1697 (SMICLFQITTSAG). Over 1698-1731 (WDGLLAPILNSAPPDCDPKKVHPGSSVEGDCGNP) the chain is Extracellular. Cys-1713 and Cys-1728 are joined by a disulfide. A helical membrane pass occupies residues 1732-1757 (SVGIFYFVSYIIISFLVVVNMYIAVI). At 1758–1984 (LENFSVATEE…EDKEKDESRK (227 aa)) the chain is on the cytoplasmic side. The region spanning 1887–1916 (EEVSATIIQRAYRRYRLRQHVKNISSIYIK) is the IQ domain. Basic and acidic residues predominate over residues 1916–1930 (KDGDRDDDLPNKEDT). Residues 1916-1984 (KDGDRDDDLP…EDKEKDESRK (69 aa)) form a disordered region. Residues 1946–1958 (VTASTISPPSYDS) are compositionally biased toward polar residues. Positions 1960–1984 (TKPDQEKYETDKTEKEDKEKDESRK) are enriched in basic and acidic residues.

It belongs to the sodium channel (TC 1.A.1.10) family. Nav1.7/SCN9A subfamily. As to quaternary structure, the Nav1.7 voltage-gated sodium channel consists of an ion-conducting alpha subunit SCN9A which is functional on its own regulated by one or more beta-1 (SCN1B), beta-2 (SCN2B), beta-3 (SCN3B) and beta-4 (SCN4B) subunits. SCN1B and SCN3B are non-covalently associated with SCN9A. SCN2B and SCN4B are disulfide-linked to SCN9A. SCN1B regulates channel inactivation. Interacts with NEDD4 and NEDD4L; regulates Nav1.7 activity most probably through ubiquitination and subsequent endocytosis. Interacts with TMEM233; modulates the gating properties of NaV1.7. Phosphorylation at Ser-1488 by PKC in a highly conserved cytoplasmic loop increases peak sodium currents. Post-translationally, ubiquitinated by NEDD4L; which may promote its endocytosis. Does not seem to be ubiquitinated by NEDD4. In terms of processing, ubiquitinated by NEDD4L; which may promote its endocytosis. In terms of tissue distribution, expressed at high level in the dorsal root ganglion and at much lower levels in the brain, sciatic nerve, nodose ganglia, heart, thyroid and adrenal glands and Schwann cells, but not in the cardiac and skeletal muscles, brain and liver.

The protein localises to the cell membrane. It is found in the cell projection. It localises to the neuron projection. The protein resides in the axon. It catalyses the reaction Na(+)(in) = Na(+)(out). With respect to regulation, inhibited by the conotoxin GVIIJ. Functionally, pore-forming subunit of Nav1.7, a voltage-gated sodium (Nav) channel that directly mediates the depolarizing phase of action potentials in excitable membranes. Navs, also called VGSCs (voltage-gated sodium channels) or VDSCs (voltage-dependent sodium channels), operate by switching between closed and open conformations depending on the voltage difference across the membrane. In the open conformation they allow Na(+) ions to selectively pass through the pore, along their electrochemical gradient. The influx of Na(+) ions provokes membrane depolarization, initiating the propagation of electrical signals throughout cells and tissues. Nav1.7 plays a crucial role in controlling the excitability and action potential propagation from nociceptor neurons, thereby contributing to the sensory perception of pain. This chain is Sodium channel protein type 9 subunit alpha, found in Rattus norvegicus (Rat).